Consider the following 639-residue polypeptide: Chaperone protein DnaK (639 aa).

Threonine 198 bears the Phosphothreonine; by autocatalysis mark. Residues 603 to 618 (AKAQTQGGAQEGAAKQ) are compositionally biased toward low complexity. The tract at residues 603-639 (AKAQTQGGAQEGAAKQSNATADDVVDAEFEEVKDDKK) is disordered. Residues 625-639 (DVVDAEFEEVKDDKK) are compositionally biased toward acidic residues.

Belongs to the heat shock protein 70 family.

Acts as a chaperone. The polypeptide is Chaperone protein DnaK (Shewanella sp. (strain ANA-3)).